A 435-amino-acid chain; its full sequence is 5-hydroxybenzimidazole synthase (435 aa).

Substrate contacts are provided by residues M95, Y124, H163, 186-188, 227-230, and E266; these read SKG and NGLR. A Zn(2+)-binding site is contributed by H270. Y293 lines the substrate pocket. H334 contacts Zn(2+). The [4Fe-4S] cluster site is built by C410, C413, and C417.

This sequence belongs to the ThiC family. 5-hydroxybenzimidazole synthase subfamily. As to quaternary structure, homodimer. It depends on [4Fe-4S] cluster as a cofactor.

It carries out the reaction 5-amino-1-(5-phospho-beta-D-ribosyl)imidazole + AH2 + S-adenosyl-L-methionine = 5-hydroxybenzimidazole + 5'-deoxyadenosine + formate + L-methionine + A + NH4(+) + phosphate + 2 H(+). Catalyzes the conversion of aminoimidazole ribotide (AIR) to 5-hydroxybenzimidazole (5-HBI) in a radical S-adenosyl-L-methionine (SAM)-dependent reaction. Is thus involved in the anaerobic biosynthesis of the benzimidazole lower axial ligand of the cobamide produced by G.metallireducens. The polypeptide is 5-hydroxybenzimidazole synthase (Geobacter metallireducens (strain ATCC 53774 / DSM 7210 / GS-15)).